We begin with the raw amino-acid sequence, 448 residues long: Chaperone SurA (448 aa).

A signal peptide spans 1 to 27 (MKKTLRFAAVASGLVASLITVAPSASA). PpiC domains follow at residues 185–288 (QQDL…RLVE) and 301–399 (IVQT…QVLG).

The protein resides in the periplasm. The enzyme catalyses [protein]-peptidylproline (omega=180) = [protein]-peptidylproline (omega=0). In terms of biological role, chaperone involved in the correct folding and assembly of outer membrane proteins. Recognizes specific patterns of aromatic residues and the orientation of their side chains, which are found more frequently in integral outer membrane proteins. May act in both early periplasmic and late outer membrane-associated steps of protein maturation. This is Chaperone SurA from Burkholderia mallei (strain ATCC 23344).